A 502-amino-acid polypeptide reads, in one-letter code: Glycerol kinase (502 aa).

Threonine 14 serves as a coordination point for ADP. Threonine 14, threonine 15, and serine 16 together coordinate ATP. Threonine 14 contributes to the sn-glycerol 3-phosphate binding site. Arginine 18 serves as a coordination point for ADP. 4 residues coordinate sn-glycerol 3-phosphate: arginine 84, glutamate 85, tyrosine 136, and aspartate 246. Positions 84, 85, 136, 246, and 247 each coordinate glycerol. ADP contacts are provided by threonine 268 and glycine 311. Threonine 268, glycine 311, glutamine 315, and glycine 412 together coordinate ATP. ADP-binding residues include glycine 412 and asparagine 416.

It belongs to the FGGY kinase family. As to quaternary structure, homotetramer and homodimer (in equilibrium). Heterodimer with EIIA-Glc. Binds 1 zinc ion per glycerol kinase EIIA-Glc dimer. The zinc ion is important for dimerization.

The catalysed reaction is glycerol + ATP = sn-glycerol 3-phosphate + ADP + H(+). Its pathway is polyol metabolism; glycerol degradation via glycerol kinase pathway; sn-glycerol 3-phosphate from glycerol: step 1/1. Its activity is regulated as follows. Activity of this regulatory enzyme is affected by several metabolites. Allosterically and non-competitively inhibited by fructose 1,6-bisphosphate (FBP) and unphosphorylated phosphocarrier protein EIIA-Glc (III-Glc), an integral component of the bacterial phosphotransferase (PTS) system. Its function is as follows. Key enzyme in the regulation of glycerol uptake and metabolism. Catalyzes the phosphorylation of glycerol to yield sn-glycerol 3-phosphate. The sequence is that of Glycerol kinase from Escherichia coli O8 (strain IAI1).